The chain runs to 1077 residues: TSC22 domain family protein 1 (1077 aa).

The interval 1 to 98 (MHQPPESTAA…SQAQLQGQPL (98 aa)) is required for interaction with TGFBR1 and promotion of TGF-beta signaling. Disordered regions lie at residues 22–112 (MAHP…SGFQ), 125–283 (ISSN…VPSS), 458–492 (QTPTEASSSERESTSGSSVSSSVSTLSHYTESVGS), 842–874 (SSAAPSGMPSVPTNLVPPQNIAQPPATQNGSLV), and 909–947 (QAIGSQMEDARRPAEPSLGGLPQTMSGDSGGMSAVSDGS). A compositionally biased stretch (pro residues) spans 58 to 70 (FPPPSLLQPPPPA). Residues 84 to 96 (SLNLLSQAQLQGQ) show a composition bias toward low complexity. The segment covering 133–142 (EDTESYDDLD) has biased composition (acidic residues). The segment covering 216–240 (HPHHLHHHHHPHHGHHLHHGHHHSS) has biased composition (basic residues). The residue at position 263 (Ser263) is a Phosphoserine. The segment covering 471 to 489 (TSGSSVSSSVSTLSHYTES) has biased composition (low complexity). The span at 852–874 (VPTNLVPPQNIAQPPATQNGSLV) shows a compositional bias: polar residues. Over residues 933-947 (MSGDSGGMSAVSDGS) the composition is skewed to low complexity. The interval 1010-1031 (LKEQIKELIEKNSQLEQENNLL) is leucine-zipper. A disordered region spans residues 1042 to 1077 (QFQAQLQTGSPPATTQPQGTTQPPAQPASQGSGSTA). Positions 1048 to 1077 (QTGSPPATTQPQGTTQPPAQPASQGSGSTA) are enriched in low complexity.

It belongs to the TSC-22/Dip/Bun family. In terms of assembly, forms homodimers. Forms heterodimers. Component of a complex composed of TSC22D1 (via N-terminus), TGFBR1 and TGFBR2; the interaction between TSC22D1 and TGFBR1 is inhibited by SMAD7 and promoted by TGFB1. Interacts with SMAD7; the interaction requires TGF-beta and the interaction is inhibited by TGFBR1. Interacts with TPT1/fortilin; interaction results in the destabilization of TSC22D1 protein and prevents TSC22D1-mediated apoptosis. Interacts with SMAD4 (via N-terminus). Interacts with ACVRL1/ALK1, ACVR1/ALK2, BMPR1A/ALK3, ACVR1B/ALK4, BMPR1B/ALK6, ACVR2A/ACTRII, and BMPR2. Interacts with SMAD6. Interacts with TFE3; the interaction is enhanced in the presence of TGF-beta. As to quaternary structure, forms a heterodimer with TSC22D4/THG1. Forms a heterodimer with TSC22D4/THG1. Interacts with histone H1-2. Interacts with GNL3. As to expression, expressed in bone marrow cells (at protein level). Expressed in T-cells. Expressed in the brain. In terms of tissue distribution, expressed in the myoepithelial cells of the mammary gland ducts and alveoli, expression is consistent throughout pregnancy, lactation and involution (at protein level). Expressed in the cortex, medulla and papilla of the kidney. Expressed in the myoepithelial cells of the mammary gland, expression significantly increases in the secretory luminal epithelium of the mammary gland at the initiation of involution, with levels decreasing from day 3 of involution onwards (at protein level). Expressed in the cortex, medulla and papilla of the kidney.

Its subcellular location is the cytoplasm. The protein resides in the nucleus. The protein localises to the cell membrane. It is found in the mitochondrion. Functionally, transcriptional repressor. Acts on the C-type natriuretic peptide (CNP) promoter. Acts to promote CASP3-mediated apoptosis. Positively regulates TGF-beta signaling by interacting with SMAD7 which inhibits binding of SMAD7 to TGFBR1, preventing recruitment of SMURF ubiquitin ligases to TGFBR1 and inhibiting SMURF-mediated ubiquitination and degradation of TGFBR1. Contributes to enhancement of TGF-beta signaling by binding to and modulating the transcription activator activity of SMAD4. Promotes TGF-beta-induced transcription of COL1A2; via its interaction with TFE3 at E-boxes in the gene proximal promoter. Plays a role in the repression of hematopoietic precursor cell growth. Promotes IL2 deprivation-induced apoptosis in T-lymphocytes, via repression of TSC22D3/GILZ transcription and activation of the caspase cascade. In terms of biological role, may act to negatively regulate TGFB3 signaling and thereby inhibit cell death in mammary gland cells. Its function is as follows. Positively regulates cell death in response to TGFB3 during mammary gland involution. The polypeptide is TSC22 domain family protein 1 (Mus musculus (Mouse)).